Here is a 107-residue protein sequence, read N- to C-terminus: Quaternary ammonium compound-resistance protein QacC (107 aa).

The Cytoplasmic segment spans residues 1-2 (MP). A helical membrane pass occupies residues 3 to 20 (YIYLIIAISTEVIGSAFL). The Extracellular segment spans residues 21–29 (KSSEGFSKF). The helical transmembrane segment at 30-47 (IPSLGTIISFGICFYFLS) threads the bilayer. At 48–56 (KTMQHLPLN) the chain is on the cytoplasmic side. Residues 57–75 (ITYATWAGLGLVLTTVVSI) traverse the membrane as a helical segment. Topologically, residues 76 to 85 (IIFKEQINLI) are extracellular. Residues 86 to 103 (TIVSIVLIIVGVVSLNIF) traverse the membrane as a helical segment. The Cytoplasmic portion of the chain corresponds to 104–107 (GTSH).

It belongs to the drug/metabolite transporter (DMT) superfamily. Small multidrug resistance (SMR) (TC 2.A.7.1) family.

It is found in the cell membrane. With respect to regulation, ethidium export is inhibited by N-ethylmaleimide (NEM). Multidrug exporter. Is implicated for the resistance to bacteriocidal quaternary ammonium compounds and ethidium bromide. This is Quaternary ammonium compound-resistance protein QacC from Staphylococcus aureus.